Reading from the N-terminus, the 142-residue chain is Small ribosomal subunit protein uS12 (142 aa).

Belongs to the universal ribosomal protein uS12 family.

The protein is Small ribosomal subunit protein uS12 of Tetrahymena thermophila.